A 236-amino-acid polypeptide reads, in one-letter code: Small ribosomal subunit protein uS2c (236 aa).

The protein belongs to the universal ribosomal protein uS2 family.

Its subcellular location is the plastid. The protein resides in the chloroplast. The protein is Small ribosomal subunit protein uS2c (rps2) of Saccharum hybrid (Sugarcane).